Consider the following 422-residue polypeptide: Probable glucuronosyltransferase Os01g0926400 (422 aa).

Over 1–8 the chain is Cytoplasmic; it reads MGTRPCAG. A helical; Signal-anchor for type II membrane protein transmembrane segment spans residues 9–29; that stretch reads VASAVAAAVAVLLLAVSCFAA. At 30-422 the chain is on the lumenal side; the sequence is AATTTQKHGR…QGLENDLKPW (393 aa). Asparagine 149 carries an N-linked (GlcNAc...) asparagine glycan.

The protein belongs to the glycosyltransferase 47 family.

The protein resides in the golgi apparatus membrane. Its function is as follows. Involved in the synthesis of glucuronoxylan hemicellulose in secondary cell walls. This chain is Probable glucuronosyltransferase Os01g0926400, found in Oryza sativa subsp. japonica (Rice).